The chain runs to 534 residues: CTP synthase (534 aa).

An amidoligase domain region spans residues 1–268; sequence MAAKYIFVTG…DQIVCDHLQL (268 aa). S14 lines the CTP pocket. S14 is a binding site for UTP. An ATP-binding site is contributed by 15–20; the sequence is SLGKGI. An L-glutamine-binding site is contributed by Y55. An ATP-binding site is contributed by D72. Mg(2+) is bound by residues D72 and E142. CTP contacts are provided by residues 149–151, 189–194, and K225; these read DIE and KSKPTQ. UTP contacts are provided by residues 189–194 and K225; that span reads KSKPTQ. The Glutamine amidotransferase type-1 domain occupies 293-534; the sequence is RIAIVGKYVE…FVRNALAAQA (242 aa). Residue G355 participates in L-glutamine binding. C382 functions as the Nucleophile; for glutamine hydrolysis in the catalytic mechanism. Residues 383-386, E406, and R463 contribute to the L-glutamine site; that span reads LGMQ. Catalysis depends on residues H508 and E510.

This sequence belongs to the CTP synthase family. As to quaternary structure, homotetramer.

It carries out the reaction UTP + L-glutamine + ATP + H2O = CTP + L-glutamate + ADP + phosphate + 2 H(+). The catalysed reaction is L-glutamine + H2O = L-glutamate + NH4(+). It catalyses the reaction UTP + NH4(+) + ATP = CTP + ADP + phosphate + 2 H(+). It functions in the pathway pyrimidine metabolism; CTP biosynthesis via de novo pathway; CTP from UDP: step 2/2. Its activity is regulated as follows. Allosterically activated by GTP, when glutamine is the substrate; GTP has no effect on the reaction when ammonia is the substrate. The allosteric effector GTP functions by stabilizing the protein conformation that binds the tetrahedral intermediate(s) formed during glutamine hydrolysis. Inhibited by the product CTP, via allosteric rather than competitive inhibition. In terms of biological role, catalyzes the ATP-dependent amination of UTP to CTP with either L-glutamine or ammonia as the source of nitrogen. Regulates intracellular CTP levels through interactions with the four ribonucleotide triphosphates. The chain is CTP synthase from Shouchella clausii (strain KSM-K16) (Alkalihalobacillus clausii).